Reading from the N-terminus, the 185-residue chain is Ribosome-recycling factor (185 aa).

The interval 138–185 is disordered; sequence ALKKQEKDGEITEDEERRLEKEVQKVTDESTKKIDQMADNKRKEIIQG.

This sequence belongs to the RRF family.

The protein localises to the cytoplasm. In terms of biological role, responsible for the release of ribosomes from messenger RNA at the termination of protein biosynthesis. May increase the efficiency of translation by recycling ribosomes from one round of translation to another. The chain is Ribosome-recycling factor from Lactobacillus delbrueckii subsp. bulgaricus (strain ATCC 11842 / DSM 20081 / BCRC 10696 / JCM 1002 / NBRC 13953 / NCIMB 11778 / NCTC 12712 / WDCM 00102 / Lb 14).